A 129-amino-acid polypeptide reads, in one-letter code: Serum amyloid A-4 protein (129 aa).

An N-terminal signal peptide occupies residues 1–18; sequence MKLLIGILFCTLIMGVTG. The segment covering 107 to 121 has biased composition (basic and acidic residues); the sequence is AEEWGRSGQDPDHFR. Positions 107–129 are disordered; that stretch reads AEEWGRSGQDPDHFRPAGLPKKY.

It belongs to the SAA family. Apolipoprotein of the HDL complex.

The protein localises to the secreted. Its function is as follows. Major acute phase reactant. The chain is Serum amyloid A-4 protein from Bos taurus (Bovine).